The sequence spans 512 residues: Probable anion transporter 3, chloroplastic (512 aa).

A chloroplast-targeting transit peptide spans 1 to 44 (MATVGSLKPLHHSSCSSSFPRNPIVNRKALLGFVFDSARKNQIR). 12 consecutive transmembrane segments (helical) span residues 102–124 (VILT…VAVV), 139–159 (VVQS…GALV), 167–187 (VLAW…WAAA), 191–211 (LALL…MPSM), 228–248 (VGIS…LTPL), 250–270 (LSSI…LLWV), 324–344 (WAII…LSWM), 359–379 (AAWF…YAGA), 396–416 (KIMQ…LNFA), 422–442 (AAVF…GFLL), 462–482 (AGTL…QWLG), and 486–506 (AFLT…LLFA).

Belongs to the major facilitator superfamily. Sodium/anion cotransporter (TC 2.A.1.14) family. As to expression, expressed in roots.

It localises to the plastid. The protein localises to the chloroplast membrane. Its function is as follows. Inorganic phosphate and probable anion transporter. The protein is Probable anion transporter 3, chloroplastic (ANTR3) of Arabidopsis thaliana (Mouse-ear cress).